A 1301-amino-acid polypeptide reads, in one-letter code: DNA-directed RNA polymerase subunit beta (1301 aa).

It belongs to the RNA polymerase beta chain family. As to quaternary structure, the RNAP catalytic core consists of 2 alpha, 1 beta, 1 beta' and 1 omega subunit. When a sigma factor is associated with the core the holoenzyme is formed, which can initiate transcription.

It carries out the reaction RNA(n) + a ribonucleoside 5'-triphosphate = RNA(n+1) + diphosphate. In terms of biological role, DNA-dependent RNA polymerase catalyzes the transcription of DNA into RNA using the four ribonucleoside triphosphates as substrates. The sequence is that of DNA-directed RNA polymerase subunit beta from Chlorobium luteolum (strain DSM 273 / BCRC 81028 / 2530) (Pelodictyon luteolum).